The primary structure comprises 476 residues: Serine/threonine-protein kinase chk-2 (476 aa).

Residues 66–127 (FVCGRGSDDA…NGTLVNQEMI (62 aa)) enclose the FHA domain. Positions 170-436 (HVTSHSLGKG…AVELMSTQWM (267 aa)) constitute a Protein kinase domain. ATP-binding positions include 177–184 (GKGGFGKV), lysine 199, and 252–258 (EYVGGGE). The active-site Proton acceptor is the aspartate 301. Residues 305 to 306 (EN) and aspartate 322 contribute to the ATP site.

This sequence belongs to the protein kinase superfamily. CAMK Ser/Thr protein kinase family. CHK2 subfamily. Mg(2+) is required as a cofactor. In terms of tissue distribution, highly expressed in germline tissue.

It is found in the nucleus. The enzyme catalyses L-seryl-[protein] + ATP = O-phospho-L-seryl-[protein] + ADP + H(+). It carries out the reaction L-threonyl-[protein] + ATP = O-phospho-L-threonyl-[protein] + ADP + H(+). Serine/threonine-protein kinase which is required for checkpoint-mediated cell cycle arrest, activation of DNA repair and apoptosis in response to the presence of DNA double-strand breaks. May also negatively regulate cell cycle progression during unperturbed cell cycles. Phosphorylates and inhibits cdc25 phosphatase, preventing entry into mitosis. Required for nuclear reorganization and homologous chromosome pairing during meiotic prophase. The polypeptide is Serine/threonine-protein kinase chk-2 (chk-2) (Caenorhabditis elegans).